The primary structure comprises 492 residues: Ribose import ATP-binding protein RbsA (492 aa).

2 ABC transporter domains span residues 3-239 and 238-492; these read IDMR…VGRK and RKLE…TGGK. An ATP-binding site is contributed by 35–42; it reads GENGAGKS.

The protein belongs to the ABC transporter superfamily. Ribose importer (TC 3.A.1.2.1) family. In terms of assembly, the complex is composed of an ATP-binding protein (RbsA), two transmembrane proteins (RbsC) and a solute-binding protein (RbsB).

The protein resides in the cell membrane. It catalyses the reaction D-ribose(out) + ATP + H2O = D-ribose(in) + ADP + phosphate + H(+). Part of the ABC transporter complex RbsABC involved in ribose import. Responsible for energy coupling to the transport system. This chain is Ribose import ATP-binding protein RbsA, found in Streptococcus agalactiae serotype III (strain NEM316).